The sequence spans 167 residues: 2-C-methyl-D-erythritol 2,4-cyclodiphosphate synthase (167 aa).

A divalent metal cation is bound by residues aspartate 15 and histidine 17. 4-CDP-2-C-methyl-D-erythritol 2-phosphate contacts are provided by residues 15 to 17 and 43 to 44; these read DIH and HS. Position 51 (histidine 51) interacts with a divalent metal cation. 4-CDP-2-C-methyl-D-erythritol 2-phosphate-binding positions include 65–67, 141–144, and arginine 151; these read DIG and TTNE.

Belongs to the IspF family. In terms of assembly, homotrimer. A divalent metal cation is required as a cofactor.

The catalysed reaction is 4-CDP-2-C-methyl-D-erythritol 2-phosphate = 2-C-methyl-D-erythritol 2,4-cyclic diphosphate + CMP. It functions in the pathway isoprenoid biosynthesis; isopentenyl diphosphate biosynthesis via DXP pathway; isopentenyl diphosphate from 1-deoxy-D-xylulose 5-phosphate: step 4/6. Involved in the biosynthesis of isopentenyl diphosphate (IPP) and dimethylallyl diphosphate (DMAPP), two major building blocks of isoprenoid compounds. Catalyzes the conversion of 4-diphosphocytidyl-2-C-methyl-D-erythritol 2-phosphate (CDP-ME2P) to 2-C-methyl-D-erythritol 2,4-cyclodiphosphate (ME-CPP) with a corresponding release of cytidine 5-monophosphate (CMP). This is 2-C-methyl-D-erythritol 2,4-cyclodiphosphate synthase from Prochlorococcus marinus (strain MIT 9312).